Here is a 185-residue protein sequence, read N- to C-terminus: MRVVLITLFLFIGAAVAEDAGIDAITPEEGKANNIIEAYESPRFQKFVTHCSSHVTQTCSGNDPLNNQEASRMNSPFGLSFCLFDSMEKCLADHKASLKDPQDNNNLASMSSLPGSIQNQPLLIETVKFRAVLKTCSHVSARYCFTNPNVATSALADCLMPSLTHCVYPSSSILLPPPPPPPPLI.

Residues 1–17 (MRVVLITLFLFIGAAVA) form the signal peptide.

It belongs to the nodulin 20 family.

It localises to the symbiosome. Its subcellular location is the peribacteroid membrane. It is found in the peribacteroid space. This chain is Nodulin-20, found in Glycine max (Soybean).